The chain runs to 569 residues: BICD family-like cargo adapter 1 (569 aa).

The segment at 1–36 is disordered; it reads MSASCLDLISAPPQPDSDRMDRALNPGRQNSPDTAG. The CC1 box signature appears at 97-101; sequence AAKLG. Residues 102–283 adopt a coiled-coil conformation; the sequence is KALLERNQDL…TLELEKHCHH (182 aa). The tract at residues 385–405 is disordered; sequence ALSTDSSMDESSETLSAKDVP. Residues 458–520 adopt a coiled-coil conformation; the sequence is NEQLQSAIRD…LEAWQDDMHR (63 aa). The disordered stretch occupies residues 533–554; sequence EWKDPPFSFSRRGAAASRPTQR.

Belongs to the BICDR family. As to quaternary structure, part of a tripartite complex with dynein and dynactin, acts an adapter linking the dynein motor complex and dynactin. As to expression, highly expressed in developing neural tissues and developing eye.

It localises to the cytoplasm. The protein resides in the cytoskeleton. It is found in the microtubule organizing center. The protein localises to the centrosome. Acts as an adapter protein linking the dynein motor complex to various cargos and converts dynein from a non-processive to a highly processive motor in the presence of dynactin. Facilitates the interaction between dynein and dynactin and activates dynein processivity (the ability to move along a microtubule for a long distance without falling off the track). Predominantly recruits 2 dyneins, which increases both the force and speed of the microtubule motor. Component of secretory vesicle machinery in developing neurons that acts as a regulator of neurite outgrowth. Regulates the secretory vesicle transport by controlling the accumulation of Rab6-containing secretory vesicles in the pericentrosomal region restricting anterograde secretory transport during the early phase of neuronal differentiation, thereby inhibiting neuritogenesis. The chain is BICD family-like cargo adapter 1 (bicdl1) from Danio rerio (Zebrafish).